Here is a 102-residue protein sequence, read N- to C-terminus: Large ribosomal subunit protein uL23 (102 aa).

This sequence belongs to the universal ribosomal protein uL23 family. Part of the 50S ribosomal subunit. Contacts protein L29, and trigger factor when it is bound to the ribosome.

One of the early assembly proteins it binds 23S rRNA. One of the proteins that surrounds the polypeptide exit tunnel on the outside of the ribosome. Forms the main docking site for trigger factor binding to the ribosome. The protein is Large ribosomal subunit protein uL23 of Cutibacterium acnes (strain DSM 16379 / KPA171202) (Propionibacterium acnes).